We begin with the raw amino-acid sequence, 484 residues long: MNRIHSNSDSAAGVTALTHHHLSNVSCVSSGSLGKRQHRVNSTFGDGNAACLLSGKISLQEASNALKQLLDAVPGNHKRPSLPDFLQTNPAVLSMMMTSLILNVFGNNAQSLCQQLERATEVQNALRNKQVKEYQEQIQKAIEQEDKARKAGIFGAIFDWITGIFETVIGALKVVEGFLSGNPAEMASGVAYMAAGCAGMVKAGAETAMMCGADHDTCQAIIDVTSKIQFGCEAVALALDVFQIGRAFMATRGLSGAAAKVLDSGFGEEVVERMVGAGEAEIEELAEKFGEEVSESFSKQFEPLEREMAMANEMAEEAAEFSRNVENNMTRSAGKSFTKEGVKAMAKEAAKEALEKCVQEGGKFLLKKFRNKVLFNMFKKILYALLRDCSFKGLQAIRCATEGASQMNTGMVNTEKAKIEKKIEQLITQQRFLDFIMQQTENQKKIEQKRLEELYKGSGAALRDVLDTIDHYSSVQARIAGYRA.

2 helical membrane-spanning segments follow: residues 85-105 (FLQTNPAVLSMMMTSLILNVF) and 152-172 (GIFGAIFDWITGIFETVIGAL). Coiled-coil stretches lie at residues 107–152 (NNAQ…RKAG) and 413–457 (NTEK…LYKG).

This sequence belongs to the SctE/SipB/YopB family. As to quaternary structure, the core secretion machinery of the T3SS is composed of approximately 20 different proteins, including cytoplasmic components, a base, an export apparatus and a needle. This subunit is involved in the formation of a pore, called the translocon, in host membrane. May form a complex with SseB and SseD/SctB2. SseB is required for correct localization of SseC/SctE2 on the bacterial cell surface.

The protein localises to the secreted. It is found in the cell surface. The protein resides in the host membrane. Its function is as follows. Component of the type III secretion system 2 (SPI-2 T3SS), also called injectisome, which is used to inject bacterial effector proteins into eukaryotic host cells. SseC/SctE2 and SseD/SctB2 are inserted into the host membrane where they form a pore and allow the translocation of effector proteins into the cytosol of target cells. In terms of biological role, required for the translocation of SPI-2 effector proteins. Required for systemic Salmonella infection of the mouse. Essential for SpvB-induced actin depolymerization in the host cell cytoplasm. This is SPI-2 type 3 secretion system translocon protein SctE from Salmonella typhimurium (strain LT2 / SGSC1412 / ATCC 700720).